A 252-amino-acid chain; its full sequence is Triosephosphate isomerase (252 aa).

10-12 lines the substrate pocket; it reads NWK. The active-site Electrophile is the His96. The active-site Proton acceptor is Glu168. Substrate contacts are provided by residues Gly174, Ser214, and 235–236; that span reads GG.

This sequence belongs to the triosephosphate isomerase family. As to quaternary structure, homodimer.

Its subcellular location is the cytoplasm. The catalysed reaction is D-glyceraldehyde 3-phosphate = dihydroxyacetone phosphate. The protein operates within carbohydrate biosynthesis; gluconeogenesis. It functions in the pathway carbohydrate degradation; glycolysis; D-glyceraldehyde 3-phosphate from glycerone phosphate: step 1/1. In terms of biological role, involved in the gluconeogenesis. Catalyzes stereospecifically the conversion of dihydroxyacetone phosphate (DHAP) to D-glyceraldehyde-3-phosphate (G3P). The chain is Triosephosphate isomerase from Lactobacillus acidophilus (strain ATCC 700396 / NCK56 / N2 / NCFM).